Here is a 312-residue protein sequence, read N- to C-terminus: Ornithine carbamoyltransferase (312 aa).

Carbamoyl phosphate is bound by residues 57 to 60 (STRT), glutamine 84, arginine 108, and 135 to 138 (HPCQ). L-ornithine contacts are provided by residues asparagine 166, aspartate 226, and 230–231 (SM). Residues 265–266 (CL) and arginine 293 each bind carbamoyl phosphate.

The protein belongs to the aspartate/ornithine carbamoyltransferase superfamily. OTCase family.

The protein resides in the cytoplasm. It carries out the reaction carbamoyl phosphate + L-ornithine = L-citrulline + phosphate + H(+). The protein operates within amino-acid biosynthesis; L-arginine biosynthesis; L-arginine from L-ornithine and carbamoyl phosphate: step 1/3. Reversibly catalyzes the transfer of the carbamoyl group from carbamoyl phosphate (CP) to the N(epsilon) atom of ornithine (ORN) to produce L-citrulline. The polypeptide is Ornithine carbamoyltransferase (Brucella ovis (strain ATCC 25840 / 63/290 / NCTC 10512)).